Here is a 775-residue protein sequence, read N- to C-terminus: K(+)-insensitive pyrophosphate-energized proton pump (775 aa).

5 helical membrane passes run 9 to 29 (SLAVWAVLVISLLGIGYAFFI), 65 to 85 (ISILIVILTFVLAASVFIIPP), 108 to 128 (AVAFLMGSLFSYAVGFVGMNV), 160 to 180 (MLTVGLGLLGGTLIFMVFGIA), and 185 to 205 (LLGFGFGGSLIALFMRVGGGI). Residue K208 coordinates substrate. Residues D211, D215, and D241 each contribute to the Mg(2+) site. 6 consecutive transmembrane segments (helical) span residues 259–279 (VTLVSALILGLVLGDAVVGTI), 288–308 (FIIFPLVLRAIGVVASVIGNL), 327–347 (FYIAAGLAIAASAAATPVFMV), 359–379 (FFATLSGVVLAIVLDKLTEYF), 413–433 (SVWAILVISASIFTSVLIYAG), and 442–462 (AILYGVSLTGIGMLLLTGNTI). D472 serves as a coordination point for Mg(2+). 4 helical membrane passes run 508-528 (IAIGSAVIAAVALYGSYFTDV), 555-575 (PVFIGLLIGGAVPFLFSALTI), 622-642 (LISLGLIAVMVPIIVGFTLGV), and 644-664 (ALGGFLAGIILTGQLMAVFQA). Ca(2+) contacts are provided by D671, D697, and D701. K704 lines the substrate pocket. 2 helical membrane-spanning segments follow: residues 710–730 (ALNPMIKVINLVALIIAPIVV) and 735–755 (GSPGVIIAMIICGAALVWAIW).

Belongs to the H(+)-translocating pyrophosphatase (TC 3.A.10) family. K(+)-insensitive subfamily. As to quaternary structure, homodimer. The cofactor is Mg(2+).

It localises to the cell membrane. The enzyme catalyses diphosphate + H2O + H(+)(in) = 2 phosphate + 2 H(+)(out). Proton pump that utilizes the energy of pyrophosphate hydrolysis as the driving force for proton movement across the membrane. Generates a proton motive force. This is K(+)-insensitive pyrophosphate-energized proton pump from Chloroflexus aurantiacus (strain ATCC 29366 / DSM 635 / J-10-fl).